The chain runs to 442 residues: Probable 6-phospho-beta-glucosidase (442 aa).

Residue 5-73 (LKIVTIGGGS…VPIDIHLTLD (69 aa)) coordinates NAD(+). Substrate contacts are provided by arginine 96 and asparagine 150. The Mn(2+) site is built by cysteine 172 and histidine 202. Tyrosine 256 (proton acceptor) is an active-site residue.

The protein belongs to the glycosyl hydrolase 4 family. The cofactor is NAD(+). A divalent metal cation is required as a cofactor.

It carries out the reaction 6-phospho-beta-D-glucosyl-(1-&gt;4)-D-glucose + H2O = D-glucose 6-phosphate + D-glucose. In terms of biological role, hydrolyzes phospho-beta-glucosides. The chain is Probable 6-phospho-beta-glucosidase (licH) from Bacillus subtilis (strain 168).